Reading from the N-terminus, the 290-residue chain is Tegument protein VP22 (290 aa).

A compositionally biased stretch (polar residues) spans 98-112; the sequence is STSHGRLSPTKTTPH. Residues 98–156 are disordered; the sequence is STSHGRLSPTKTTPHPKSAGVTPPQRVPARPATRAAAPSATPTQPDCVAKQRTSPGVNS. The segment covering 118–142 has biased composition (low complexity); the sequence is VTPPQRVPARPATRAAAPSATPTQP. Positions 146 to 149 match the Nuclear localization signal motif; the sequence is AKQR. The Nuclear export signal motif lies at 219 to 231; it reads LDRFLKAAAIRIL.

This sequence belongs to the alphaherpesvirinae VP22 tegument protein family. As to quaternary structure, interacts with gE (via C-terminus); this interaction is necessary for the recruitment of VP22 to the Golgi and its packaging into virions. Interacts with gM (via C-terminus). Interacts with VP16; this interaction allows the formation of a tripartite complex composed of VP16, VP22 and UL41/VHS. Interacts with the capsid-binding protein UL16. Interacts with host CGAS. In terms of processing, highly phosphorylated in the host cell. Packaging is selective for underphosphorylated forms.

The protein resides in the virion tegument. The protein localises to the host cytoplasm. It localises to the host nucleus. It is found in the host Golgi apparatus. Its function is as follows. Tegument protein that plays different roles during the time course of infection. Participates in both the accumulation of viral mRNAs and viral protein translation at late time of infection. Modulates the RNase activity of the virion host shutoff protein UL41 probably to ensure necessary levels of key cellular mRNAs and proteins. Plays a role in microtubule reorganization that occurs after viral infection by stabilizing microtubule network. Plays a role in the inhibition of host innate immune system by targeting the CGAS enzymatic activity which is the principal cytosolic DNA sensor that detects invading viral DNA. Acts by mediating disruption of liquid-like droplets in which CGAS is activated, thereby preventing CGAS activity. The polypeptide is Tegument protein VP22 (11) (Equus caballus (Horse)).